The following is a 171-amino-acid chain: Endoribonuclease YbeY (171 aa).

Residues His-126, His-130, and His-136 each coordinate Zn(2+).

The protein belongs to the endoribonuclease YbeY family. Zn(2+) serves as cofactor.

Its subcellular location is the cytoplasm. Its function is as follows. Single strand-specific metallo-endoribonuclease involved in late-stage 70S ribosome quality control and in maturation of the 3' terminus of the 16S rRNA. The polypeptide is Endoribonuclease YbeY (Rhizobium leguminosarum bv. trifolii (strain WSM2304)).